The chain runs to 66 residues: Large ribosomal subunit protein bL35 (66 aa).

The segment covering 18 to 27 (ATGKIKSTQS) has biased composition (polar residues). The tract at residues 18-41 (ATGKIKSTQSAKRHGMTKRSKRSI) is disordered. The segment covering 28–41 (AKRHGMTKRSKRSI) has biased composition (basic residues).

This sequence belongs to the bacterial ribosomal protein bL35 family.

This is Large ribosomal subunit protein bL35 from Ehrlichia ruminantium (strain Gardel).